A 42-amino-acid chain; its full sequence is Photosystem I reaction center subunit IX (42 aa).

A helical transmembrane segment spans residues 7–27 (FLSTAPVLIMALLTFTAGLLI).

Belongs to the PsaJ family.

The protein resides in the cellular thylakoid membrane. May help in the organization of the PsaE and PsaF subunits. In Rippkaea orientalis (strain PCC 8801 / RF-1) (Cyanothece sp. (strain PCC 8801)), this protein is Photosystem I reaction center subunit IX.